A 373-amino-acid chain; its full sequence is UDP-3-O-acylglucosamine N-acyltransferase 2 (373 aa).

Histidine 257 acts as the Proton acceptor in catalysis. The tract at residues 346 to 373 is disordered; that stretch reads DGRTAASAEAAAPSSDATGVDQPDQAAS. Low complexity predominate over residues 350–362; sequence AASAEAAAPSSDA.

Belongs to the transferase hexapeptide repeat family. LpxD subfamily. Homotrimer.

The catalysed reaction is a UDP-3-O-[(3R)-3-hydroxyacyl]-alpha-D-glucosamine + a (3R)-hydroxyacyl-[ACP] = a UDP-2-N,3-O-bis[(3R)-3-hydroxyacyl]-alpha-D-glucosamine + holo-[ACP] + H(+). It functions in the pathway bacterial outer membrane biogenesis; LPS lipid A biosynthesis. In terms of biological role, catalyzes the N-acylation of UDP-3-O-acylglucosamine using 3-hydroxyacyl-ACP as the acyl donor. Is involved in the biosynthesis of lipid A, a phosphorylated glycolipid that anchors the lipopolysaccharide to the outer membrane of the cell. The polypeptide is UDP-3-O-acylglucosamine N-acyltransferase 2 (Rhodopseudomonas palustris (strain BisB18)).